A 588-amino-acid polypeptide reads, in one-letter code: Cation channel sperm-associated protein 2 (588 aa).

Topologically, residues M1–S106 are cytoplasmic. A helical transmembrane segment spans residues V107 to L129. The Extracellular portion of the chain corresponds to M130–W138. The chain crosses the membrane as a helical span at residues P139–L164. Residues A165–D173 lie on the Cytoplasmic side of the membrane. A helical transmembrane segment spans residues A174–P198. Topologically, residues A199–S201 are extracellular. The chain crosses the membrane as a helical span at residues V202–A220. Topologically, residues R221 to K237 are cytoplasmic. A helical membrane pass occupies residues S238–F260. Topologically, residues F261–S279 are extracellular. Residues D280 to F292 constitute an intramembrane region (helical; Pore-forming). The Extracellular segment spans residues T293–R312. Residues V313–V339 traverse the membrane as a helical segment. Topologically, residues T340–K588 are cytoplasmic. Residues S376–H512 are disordered. Acidic residues predominate over residues D390–S439. Basic and acidic residues predominate over residues E440–A502.

It belongs to the cation channel sperm-associated (TC 1.A.1.19) family. As to quaternary structure, component of the CatSper complex or CatSpermasome composed of the core pore-forming members CATSPER1, CATSPER2, CATSPER3 and CATSPER4 as well as auxiliary members CATSPERB, CATSPERG2, CATSPERD, CATSPERE, CATSPERZ, C2CD6/CATSPERT, SLCO6C1, TMEM249, TMEM262 and EFCAB9. HSPA1 may be an additional auxiliary complex member. The core complex members CATSPER1, CATSPER2, CATSPER3 and CATSPER4 form a heterotetrameric channel. The auxiliary CATSPERB, CATSPERG2, CATSPERD and CATSPERE subunits form a pavilion-like structure over the pore which stabilizes the complex through interactions with CATSPER4, CATSPER3, CATSPER1 and CATSPER2 respectively. SLCO6C1 interacts with CATSPERE and TMEM262/CATSPERH interacts with CATSPERB, further stabilizing the complex. C2CD6/CATSPERT interacts at least with CATSPERD and is required for targeting the CatSper complex in the flagellar membrane. Interacts with Ca(v)3.3/CACNA1I, leading to suppression of T-type calcium channel activity. In terms of tissue distribution, testis-specific.

It localises to the cell projection. It is found in the cilium. The protein localises to the flagellum membrane. The enzyme catalyses Ca(2+)(in) = Ca(2+)(out). Its activity is regulated as follows. In contrast to the human ortholog, not activated by progesterone. Activated by intracellular alkalinization. In terms of biological role, pore-forming subunit of the CatSper complex, a sperm-specific voltage-gated calcium channel that plays a central role in sperm cell hyperactivation. Controls calcium entry to mediate the hyperactivated motility, a step needed for sperm motility which is essential late in the preparation of sperm for fertilization. The sequence is that of Cation channel sperm-associated protein 2 (Catsper2) from Mus musculus (Mouse).